The sequence spans 165 residues: Trypsin alpha-3 (165 aa).

In terms of domain architecture, Peptidase S1 spans asparagine 1–asparagine 163. The active-site Charge relay system is the aspartate 26. 2 cysteine pairs are disulfide-bonded: cysteine 89–cysteine 106 and cysteine 115–cysteine 139. Serine 119 (charge relay system) is an active-site residue.

The protein belongs to the peptidase S1 family.

The protein localises to the secreted. It is found in the extracellular space. It catalyses the reaction Preferential cleavage: Arg-|-Xaa, Lys-|-Xaa.. The chain is Trypsin alpha-3 from Lucilia cuprina (Green bottle fly).